The sequence spans 898 residues: Interleukin enhancer-binding factor 3-B (898 aa).

In terms of domain architecture, DZF spans 5 to 379 (RIFLNDDRHV…ALKRPIEEDG (375 aa)). Disordered regions lie at residues 52 to 87 (QEKD…NPTR), 374 to 403 (PIEE…PPQA), 468 to 529 (LPTG…VMEL), 627 to 651 (PPPQ…RGGF), and 711 to 799 (GEGY…QGAA). The span at 61–71 (ENPEPEETETT) shows a compositional bias: acidic residues. 2 stretches are compositionally biased toward basic and acidic residues: residues 72 to 81 (EEGKDSEAKT) and 374 to 384 (PIEEDGEDKSP). A Bipartite nuclear localization signal motif is present at residues 372–390 (KRPIEEDGEDKSPSKKKKK). Residues 399–468 (EPPQAMNALM…AVKVLQDMGL (70 aa)) enclose the DRBM 1 domain. Residues 474–483 (EKEESVDESE) are compositionally biased toward acidic residues. A compositionally biased stretch (polar residues) spans 489–513 (QTPSQTADSEQADSSAGDQSESGKQ). The DRBM 2 domain occupies 521-587 (HGKNPVMELN…ALSALEKLFP (67 aa)). Positions 637-651 (RGGMNRGRGRGRGGF) are enriched in gly residues. Over residues 717–747 (PTPPKPFVKKPPPPQQQQQPPPQHASNPPKP) the composition is skewed to pro residues. The segment covering 749 to 782 (YNQGYQGHQGGQQQQQPQQQQQQTYNQNQYSNYG) has biased composition (low complexity).

A component of a ybx2/frgy2-containing mRNA-ribonucleoprotein (mRNP) complex. Also a component of the CCAAT box transcription factor (CBTF) complex. In terms of processing, phosphorylated. Phosphorylation affects nuclear translocation. Methylated by protein arginine N-methyltransferase 1 (prmt1b) in the RGG-rich domain. Methylation decreases DNA-binding and thereby decreases transcription of the gata2 gene, but does not regulate dsRNA binding or subcellular localization.

The protein localises to the nucleus. The protein resides in the cytoplasm. Its function is as follows. RNA-binding protein that plays an essential role in the biogenesis of circular RNAs (circRNAs) which are produced by back-splicing circularization of pre-mRNAs. Within the nucleus, promotes circRNAs processing by stabilizing the regulatory elements residing in the flanking introns of the circularized exons. Plays thereby a role in the back-splicing of a subset of circRNAs. As a consequence, participates in a wide range of transcriptional and post-transcriptional processes. Binds to poly-U elements and AU-rich elements (AREs) in the 3'-UTR of target mRNAs. Upon viral infection, ILF3 accumulates in the cytoplasm and participates in the innate antiviral response. Mechanistically, ILF3 becomes phosphorylated and activated by the double-stranded RNA-activated protein kinase/PKR which releases ILF3 from cellular mature circRNAs. In turn, unbound ILF3 molecules are able to interact with and thus inhibit viral mRNAs. Has a cytoplasmic role early in development as part of a ribonucleoprotein (mRNP) complex which may regulate mRNA transport and/or translation. Following nuclear localization at the mid-blastula transition, acts as a transcription factor and binds the 5'-CCAAT-3' promoter sequence to regulate transcription of the gata2 gene as a subunit of the CCAAT box transcription factor (CBTF). Its role as an mRNP component negatively regulates its activity as a transcription factor by precluding its nuclear localization. The polypeptide is Interleukin enhancer-binding factor 3-B (ilf3-b) (Xenopus laevis (African clawed frog)).